Consider the following 611-residue polypeptide: Protein PES4 (611 aa).

The disordered stretch occupies residues 37 to 81 (FNPVVTPIRPDDYHEKTSRSSSSSHSDSPEFLRINNNKSGHKNGK). The segment covering 45–54 (RPDDYHEKTS) has biased composition (basic and acidic residues). 4 consecutive RRM domains span residues 91 to 169 (VPLF…PSLR), 179 to 247 (TNVF…GKKI), 303 to 379 (NSIF…RAQD), and 393 to 471 (STLF…WERQ).

It is found in the nucleus. The protein is Protein PES4 (PES4) of Saccharomyces cerevisiae (strain ATCC 204508 / S288c) (Baker's yeast).